A 1082-amino-acid polypeptide reads, in one-letter code: SURP and G-patch domain-containing protein 2 (1082 aa).

Position 7 is a phosphothreonine (Thr-7). Residues 65–97 (LSGSVAHSRDAGREGLRSDVFPGPSFRSSNPSI) are disordered. A compositionally biased stretch (basic and acidic residues) spans 71 to 81 (HSRDAGREGLR). Residues Ser-96 and Ser-224 each carry the phosphoserine modification. Lys-228 participates in a covalent cross-link: Glycyl lysine isopeptide (Lys-Gly) (interchain with G-Cter in SUMO2). The residue at position 275 (Thr-275) is a Phosphothreonine. Residue Ser-277 is modified to Phosphoserine. Residue Lys-305 forms a Glycyl lysine isopeptide (Lys-Gly) (interchain with G-Cter in SUMO2) linkage. A phosphoserine mark is found at Ser-315, Ser-573, and Ser-603. Residues 590–633 (IDQLVKRVIEGSLSPKERTLLKEDPAYWFLSDENSLEYKYYKLK) form an SURP motif 1 repeat. A Glycyl lysine isopeptide (Lys-Gly) (interchain with G-Cter in SUMO2) cross-link involves residue Lys-650. The interval 694–779 (RRATTGTQTL…QTSSPCPSAD (86 aa)) is disordered. Residues 697-708 (TTGTQTLLSSGT) show a composition bias toward low complexity. The segment covering 727–738 (LPDRNDAAKDCP) has biased composition (basic and acidic residues). Ser-754 and Ser-757 each carry phosphoserine. The stretch at 787–830 (TAEKLARFVAQVGPEIEQFSIENSTDNPDLWFLHDQNSSAFKFY) is one SURP motif 2 repeat. 3 disordered regions span residues 849 to 930 (NLHT…EAAE), 982 to 1002 (RIAYDRPRGRPMSKKKKPKDL), and 1030 to 1061 (LGSLGKGIREPVSVGTPSEGEGLGADGQEHKE). Phosphoserine is present on Ser-863. Composition is skewed to acidic residues over residues 868 to 877 (MEGEAEFEDE) and 885 to 904 (LESPEVMPEEEDEDDEDGGE). Residues 990–999 (GRPMSKKKKP) are compositionally biased toward basic residues. The Nuclear localization signal motif lies at 995 to 1000 (KKKKPK). The region spanning 1011-1057 (DKNLGFQMLQKMGWKEGHGLGSLGKGIREPVSVGTPSEGEGLGADGQ) is the G-patch domain.

As to expression, detected in adult testis, and in fetal brain and kidney.

Its subcellular location is the nucleus. Its function is as follows. May play a role in mRNA splicing. The sequence is that of SURP and G-patch domain-containing protein 2 (SUGP2) from Homo sapiens (Human).